The following is a 108-amino-acid chain: Ig kappa chain V-V region HP 124E1 (108 aa).

A framework-1 region spans residues 1–23 (DIQMTQTTSSLSASLGDRVTISC). C23 and C88 form a disulfide bridge. The tract at residues 24 to 34 (RASQDINNYLN) is complementarity-determining-1. Positions 35 to 49 (WYQQKPDGTVKLLIY) are framework-2. A complementarity-determining-2 region spans residues 50 to 56 (YTSRLHS). Positions 57–88 (GVPSRFSGSGSGTDYSLTISNLEQEDIATYFC) are framework-3. The interval 89–97 (QQGKTLPRT) is complementarity-determining-3. Residues 98 to 108 (FGGGTKLEIKR) form a framework-4 region.

The chain is Ig kappa chain V-V region HP 124E1 from Mus musculus (Mouse).